A 97-amino-acid chain; its full sequence is YcgL domain-containing protein PSEEN4034 (97 aa).

The YcgL domain occupies 3–87 (RICSIYKSPR…PDDDYIEHLP (85 aa)).

The protein is YcgL domain-containing protein PSEEN4034 of Pseudomonas entomophila (strain L48).